We begin with the raw amino-acid sequence, 269 residues long: Formamidopyrimidine-DNA glycosylase (269 aa).

Pro-2 (schiff-base intermediate with DNA) is an active-site residue. The active-site Proton donor is the Glu-3. The Proton donor; for beta-elimination activity role is filled by Lys-57. The DNA site is built by His-90, Arg-109, and Lys-150. Residues 235–269 (QVYGRKGEPCRVCGTPIAATKHAQRATFYCRHCQK) form an FPG-type zinc finger. Catalysis depends on Arg-259, which acts as the Proton donor; for delta-elimination activity.

It belongs to the FPG family. Monomer. Zn(2+) serves as cofactor.

It catalyses the reaction Hydrolysis of DNA containing ring-opened 7-methylguanine residues, releasing 2,6-diamino-4-hydroxy-5-(N-methyl)formamidopyrimidine.. It carries out the reaction 2'-deoxyribonucleotide-(2'-deoxyribose 5'-phosphate)-2'-deoxyribonucleotide-DNA = a 3'-end 2'-deoxyribonucleotide-(2,3-dehydro-2,3-deoxyribose 5'-phosphate)-DNA + a 5'-end 5'-phospho-2'-deoxyribonucleoside-DNA + H(+). In terms of biological role, involved in base excision repair of DNA damaged by oxidation or by mutagenic agents. Acts as a DNA glycosylase that recognizes and removes damaged bases. Has a preference for oxidized purines, such as 7,8-dihydro-8-oxoguanine (8-oxoG). Has AP (apurinic/apyrimidinic) lyase activity and introduces nicks in the DNA strand. Cleaves the DNA backbone by beta-delta elimination to generate a single-strand break at the site of the removed base with both 3'- and 5'-phosphates. The polypeptide is Formamidopyrimidine-DNA glycosylase (Salmonella paratyphi B (strain ATCC BAA-1250 / SPB7)).